The primary structure comprises 121 residues: Small ribosomal subunit protein uS13 (121 aa).

The interval 91-121 (HRMSLPVRGQRTRTNARTRRGSRKTVAGRKK) is disordered. The span at 100 to 121 (QRTRTNARTRRGSRKTVAGRKK) shows a compositional bias: basic residues.

Belongs to the universal ribosomal protein uS13 family. In terms of assembly, part of the 30S ribosomal subunit. Forms a loose heterodimer with protein S19. Forms two bridges to the 50S subunit in the 70S ribosome.

In terms of biological role, located at the top of the head of the 30S subunit, it contacts several helices of the 16S rRNA. In the 70S ribosome it contacts the 23S rRNA (bridge B1a) and protein L5 of the 50S subunit (bridge B1b), connecting the 2 subunits; these bridges are implicated in subunit movement. Contacts the tRNAs in the A and P-sites. This Prochlorococcus marinus (strain MIT 9301) protein is Small ribosomal subunit protein uS13.